We begin with the raw amino-acid sequence, 537 residues long: RNA polymerase sigma-54 factor 2 (537 aa).

The segment at 52–90 is disordered; that stretch reads ANDEASGGEAPAEAGQFSDSDGGHNDEPGGGPGEAFEPG. Over residues 55–66 the composition is skewed to low complexity; sequence EASGGEAPAEAG. The segment at residues 403-422 is a DNA-binding region (H-T-H motif); the sequence is NLKAVADAIQMHESTVSRVT. Positions 492–500 match the RPON box motif; the sequence is ARRTVAKYR. Residues 507 to 537 are disordered; sequence SSVQRRRDKQSALGNVLSTAMSDRSRNPEPA. Polar residues predominate over residues 518–528; the sequence is ALGNVLSTAMS.

This sequence belongs to the sigma-54 factor family.

In terms of biological role, sigma factors are initiation factors that promote the attachment of RNA polymerase to specific initiation sites and are then released. This sigma factor is responsible for the expression of the nitrogen fixation genes. This Bradyrhizobium diazoefficiens (strain JCM 10833 / BCRC 13528 / IAM 13628 / NBRC 14792 / USDA 110) protein is RNA polymerase sigma-54 factor 2 (rpoN2).